Here is a 247-residue protein sequence, read N- to C-terminus: NAD-dependent protein deacetylase (247 aa).

Residues 1–244 (MIYEKVAEEL…PKILENVRQK (244 aa)) enclose the Deacetylase sirtuin-type domain. NAD(+) contacts are provided by alanine 22, threonine 26, phenylalanine 33, arginine 34, glutamine 98, isoleucine 100, aspartate 101, and histidine 116. Phenylalanine 33 is a binding site for nicotinamide. Nicotinamide contacts are provided by isoleucine 100 and aspartate 101. Catalysis depends on histidine 116, which acts as the Proton acceptor. Cysteine 124, cysteine 127, cysteine 149, and cysteine 151 together coordinate Zn(2+). The NAD(+) site is built by serine 187, serine 188, asparagine 212, and valine 230.

The protein belongs to the sirtuin family. Class U subfamily. Monomer. The cofactor is Zn(2+).

The protein localises to the cytoplasm. The enzyme catalyses N(6)-acetyl-L-lysyl-[protein] + NAD(+) + H2O = 2''-O-acetyl-ADP-D-ribose + nicotinamide + L-lysyl-[protein]. In terms of biological role, NAD-dependent protein deacetylase which modulates the activities of several enzymes which are inactive in their acetylated form. Deacetylates the N-terminal lysine residue of albA1, the major archaeal DNA compaction protein and that, in turn, increases albA1's DNA binding affinity, thereby repressing transcription. The protein is NAD-dependent protein deacetylase of Saccharolobus solfataricus (strain ATCC 35092 / DSM 1617 / JCM 11322 / P2) (Sulfolobus solfataricus).